Consider the following 465-residue polypeptide: Poly(A) polymerase I (465 aa).

Active-site residues include Asp80, Asp82, and Asp162. The tract at residues 429 to 465 (SAPPDQKGMLNELDEEPSPRRRTRRPRKRAPRREGTA) is disordered. Residues 448–459 (RRRTRRPRKRAP) are compositionally biased toward basic residues.

The protein belongs to the tRNA nucleotidyltransferase/poly(A) polymerase family.

The enzyme catalyses RNA(n) + ATP = RNA(n)-3'-adenine ribonucleotide + diphosphate. Adds poly(A) tail to the 3' end of many RNAs, which usually targets these RNAs for decay. Plays a significant role in the global control of gene expression, through influencing the rate of transcript degradation, and in the general RNA quality control. The protein is Poly(A) polymerase I of Escherichia coli O157:H7.